The primary structure comprises 109 residues: MSKALLRYIRLSPTKARLVAREVQGMNAELAIASLEFMPNKAAKVISKVIASAVANGGMGAENAVVKSCRVDAGPVLRRFTPRARGRATPIRKPTSHVFVEVVEQSKDK.

Belongs to the universal ribosomal protein uL22 family. As to quaternary structure, part of the 50S ribosomal subunit.

This protein binds specifically to 23S rRNA; its binding is stimulated by other ribosomal proteins, e.g. L4, L17, and L20. It is important during the early stages of 50S assembly. It makes multiple contacts with different domains of the 23S rRNA in the assembled 50S subunit and ribosome. In terms of biological role, the globular domain of the protein is located near the polypeptide exit tunnel on the outside of the subunit, while an extended beta-hairpin is found that lines the wall of the exit tunnel in the center of the 70S ribosome. In Wolinella succinogenes (strain ATCC 29543 / DSM 1740 / CCUG 13145 / JCM 31913 / LMG 7466 / NCTC 11488 / FDC 602W) (Vibrio succinogenes), this protein is Large ribosomal subunit protein uL22.